Reading from the N-terminus, the 268-residue chain is 14-3-3-like protein GF14 iota (268 aa).

2 positions are modified to phosphoserine: serine 70 and serine 193. Threonine 214 bears the Phosphothreonine mark. A disordered region spans residues 240–268 (DLPEDGGEDNIKTEESKQEQAKPADATEN). Positions 248–261 (DNIKTEESKQEQAK) are enriched in basic and acidic residues.

The protein belongs to the 14-3-3 family. Expressed in flowers.

The protein resides in the nucleus. It is found in the cytoplasm. Functionally, is associated with a DNA binding complex that binds to the G box, a well-characterized cis-acting DNA regulatory element found in plant genes. The protein is 14-3-3-like protein GF14 iota of Arabidopsis thaliana (Mouse-ear cress).